A 396-amino-acid chain; its full sequence is Obg-like ATPase 1 (396 aa).

In terms of domain architecture, OBG-type G spans L23–L283. N32–T37 contacts ATP. The Mg(2+) site is built by S36 and T56. Residue L231 coordinates ATP. A Nuclear export signal motif is present at residues L267–L274. K294 carries the N6-acetyllysine modification. The TGS domain maps to Q304–F387.

It belongs to the TRAFAC class OBG-HflX-like GTPase superfamily. OBG GTPase family. YchF/OLA1 subfamily. Monomer. Requires Mg(2+) as cofactor.

Its subcellular location is the cytoplasm. It is found in the nucleus. It localises to the nucleolus. Hydrolyzes ATP, and can also hydrolyze GTP with lower efficiency. Has lower affinity for GTP. In Pongo abelii (Sumatran orangutan), this protein is Obg-like ATPase 1.